The primary structure comprises 219 residues: RPA-interacting protein (219 aa).

The residue at position 18 (serine 18) is a Phosphoserine. Residue lysine 121 forms a Glycyl lysine isopeptide (Lys-Gly) (interchain with G-Cter in SUMO); in isoform 2 linkage. Residues 137–212 (CPVCTKYNLR…SSLLMSCLAC (76 aa)) form an RIP-type zinc finger. A mediates nuclear export region spans residues 164–180 (SSELTEQKLRACLEGSI).

As to quaternary structure, interacts with the RPA1 subunit of RPA complex. Post-translationally, sumoylated. Sumoylation is required for localization in the nuclear PML body and transport of RPA complex in PML body. Upon UV irradiation and during S phase, it is desumoylated, releasing RPA complex that is translocated to sites of DNA damage. Sumoylation takes place at different Lys residues. Variant 'Lys-103' adds a sumoylation site and increases total sumoylation levels. In terms of tissue distribution, widely expressed. Expressed in pancreas, kidney, muscle, liver, lung, placenta, brain, heart, leukocytes, colon, intestine, ovary, testis, prostate, thymus and spleen.

It is found in the cytoplasm. Its subcellular location is the nucleus. It localises to the PML body. Functionally, mediates the import of RPA complex into the nucleus, possibly via some interaction with importin beta. Isoform 2 is sumoylated and mediates the localization of RPA complex into the PML body of the nucleus, thereby participating in RPA function in DNA metabolism. The sequence is that of RPA-interacting protein (RPAIN) from Homo sapiens (Human).